A 523-amino-acid polypeptide reads, in one-letter code: Melanoma-associated antigen E2 (523 aa).

MAGE domains follow at residues 88-288 (LEDR…YNKA) and 311-502 (MNDK…YREA).

The sequence is that of Melanoma-associated antigen E2 (MAGEE2) from Homo sapiens (Human).